The primary structure comprises 1197 residues: Envelopment polyprotein (1197 aa).

The signal sequence occupies residues 1–16 (MYVLLTILTSVLVCEA). The Cytoplasmic segment spans residues 17-130 (IIRVSLSSTR…RDAKQIGRKT (114 aa)). Residues 131–153 (MAGIAMTVLPALAVFALAPVVFA) form an internal signal sequence for glycoprotein N region. The Lumenal segment spans residues 154 to 582 (EDPHLRNRPG…GLINYQCHTA (429 aa)). Cystine bridges form between Cys-179/Cys-188, Cys-229/Cys-239, Cys-250/Cys-281, Cys-271/Cys-284, Cys-304/Cys-456, Cys-322/Cys-332, Cys-374/Cys-434, Cys-402/Cys-413, Cys-420/Cys-425, Cys-479/Cys-482, Cys-486/Cys-556, and Cys-506/Cys-511. Residues 583 to 603 (LSAFVVVFVFSSIAIICLAIL) traverse the membrane as a helical segment. Over 604-673 (YRVLKCLKIA…APIPRHAPIP (70 aa)) the chain is Cytoplasmic. The interval 608–650 (KCLKIAPRKVLNPLMWITAFIRWIYKKMVARVADNINQVNREI) is golgi retention signal. Positions 646–650 (VNREI) are important for correct targeting of the glycoproteins to the Golgi complex but not for heterodimerization. The internal signal sequence for glycoprotein C stretch occupies residues 675–690 (YSTYLMLLLIVSYASA). Intrachain disulfides connect Cys-691–Cys-731, Cys-704–Cys-713, Cys-756–Cys-852, Cys-771–Cys-965, Cys-777–Cys-825, Cys-783–Cys-832, Cys-788–Cys-814, Cys-818–Cys-823, Cys-934–Cys-947, Cys-1029–Cys-1101, Cys-1039–Cys-1042, and Cys-1049–Cys-1083. Over 691–1159 (CSELIQASSR…MSWFGGPLKT (469 aa)) the chain is Lumenal. A fusion loop region spans residues 777–783 (CHLVGEC). Asn-794 carries N-linked (GlcNAc...) asparagine; by host glycosylation. The segment at 819–830 (GGWGCGCFNVNP) is fusion loop. Residue Asn-1035 is glycosylated (N-linked (GlcNAc...) asparagine; by host). Asn-1077 carries an N-linked (GlcNAc...) asparagine; by host glycan. Residues 1160-1180 (ILLICLYVALSIGLFFLLIYL) traverse the membrane as a helical segment. The Cytoplasmic segment spans residues 1181–1197 (GGTGLSKMWLAATKKAS).

This sequence belongs to the phlebovirus envelope glycoprotein family. As to quaternary structure, heterodimer with glycoprotein C. Homotrimer (postfusion). Interacts with nucleocapsid protein N and with the polymerase L in order to package them into virus particles. Interacts with host E3 ubiquitin-protein ligase UBR4; this interaction is important for viral RNA production. Interacts with host LRP1; this interaction facilitates virus entry into the host cell. In terms of assembly, heterodimer with glycoprotein C. Specific enzymatic cleavages in vivo yield mature proteins including NSm protein, Glycoprotein C, and Glycoprotein N. In terms of processing, glycosylated. The glycans can attach to host CD209/DC-SIGN, and may play a role in virus entry into dendritic cells. Post-translationally, palmitoylated.

The protein resides in the virion membrane. Its subcellular location is the host Golgi apparatus membrane. The protein localises to the host endoplasmic reticulum membrane. It is found in the host mitochondrion outer membrane. It localises to the host Golgi apparatus. The protein resides in the virion. Its function is as follows. Structural component of the virion that interacts with glycoprotein C. It shields the hydrophobic fusion loops of the glycoprotein C, preventing premature fusion. The glycoprotein protrusions are arranged on an icosahedral lattice, with T=12 triangulation. They are able to attach the virion to the host cell receptor CD209/DC-SIGN and to promote fusion of membranes with the late endosome after endocytosis of the virion. Plays a role in the packaging of ribonucleoproteins and polymerase during virus assembly. Functionally, structural component of the virion that interacts with glycoprotein N. Acts as a class II fusion protein that is activated upon acidification and subsequent repositioning of the glycoprotein N. The glycoprotein protrusions are arranged on an icosahedral lattice, with T=12 triangulation. They are able to attach the virion to the host cell receptor CD209/DC-SIGN and to promote fusion of membranes with the late endosome after endocytosis of the virion. In terms of biological role, plays a role in the inhibition of virus-induced apoptosis. Plays a role for virus dissemination in vertebrates. Plays a role for virus dissemination in mosquitoes. May act as a structural virion protein in insects. The chain is Envelopment polyprotein (GP) from Rift valley fever virus (strain ZH-548 M12) (RVFV).